The sequence spans 89 residues: Small ribosomal subunit protein uS15 (89 aa).

It belongs to the universal ribosomal protein uS15 family. Part of the 30S ribosomal subunit. Forms a bridge to the 50S subunit in the 70S ribosome, contacting the 23S rRNA.

Its function is as follows. One of the primary rRNA binding proteins, it binds directly to 16S rRNA where it helps nucleate assembly of the platform of the 30S subunit by binding and bridging several RNA helices of the 16S rRNA. Forms an intersubunit bridge (bridge B4) with the 23S rRNA of the 50S subunit in the ribosome. This chain is Small ribosomal subunit protein uS15, found in Thermomicrobium roseum (strain ATCC 27502 / DSM 5159 / P-2).